A 242-amino-acid chain; its full sequence is Probable transcriptional regulatory protein Bamb_2332 (242 aa).

This sequence belongs to the TACO1 family.

Its subcellular location is the cytoplasm. This chain is Probable transcriptional regulatory protein Bamb_2332, found in Burkholderia ambifaria (strain ATCC BAA-244 / DSM 16087 / CCUG 44356 / LMG 19182 / AMMD) (Burkholderia cepacia (strain AMMD)).